A 246-amino-acid chain; its full sequence is tRNA pseudouridine synthase A (246 aa).

Asp53 functions as the Nucleophile in the catalytic mechanism. Residue Tyr111 coordinates substrate.

This sequence belongs to the tRNA pseudouridine synthase TruA family. In terms of assembly, homodimer.

It carries out the reaction uridine(38/39/40) in tRNA = pseudouridine(38/39/40) in tRNA. Functionally, formation of pseudouridine at positions 38, 39 and 40 in the anticodon stem and loop of transfer RNAs. This is tRNA pseudouridine synthase A from Lysinibacillus sphaericus (strain C3-41).